The chain runs to 522 residues: Target of rapamycin complex 2 subunit MAPKAP1 (522 aa).

Residue alanine 2 is modified to N-acetylalanine. An interaction with MAP3K2 region spans residues 2–184 (AFLDNPTIIL…KKIDVYLPLH (183 aa)). Positions 2–267 (AFLDNPTIIL…GFSTLALVEK (266 aa)) are interaction with NBN. Residues 38–59 (LEKTHPPSVPGDSGSEVQGSSG) form a disordered region. Threonine 86 carries the post-translational modification Phosphothreonine. Residues serine 128, serine 186, serine 315, and serine 356 each carry the phosphoserine modification. A CRIM domain is found at 139-267 (QSILSVRLEQ…GFSTLALVEK (129 aa)). Residues 279–353 (LFVRINAAHG…QNAWEFCLVR (75 aa)) are SIN1-type RBD. In terms of domain architecture, SIN1-type PH spans 382-487 (HYKSFKVSMI…IVLKVNYILE (106 aa)). Residue arginine 393 coordinates a 1,2-diacyl-sn-glycero-3-phospho-(1D-myo-inositol-3,4,5-trisphosphate). Threonine 398 carries the post-translational modification Phosphothreonine. Lysine 428 and lysine 464 together coordinate a 1,2-diacyl-sn-glycero-3-phospho-(1D-myo-inositol-3,4,5-trisphosphate). An interaction with ATF2 region spans residues 468-522 (FESDAATVSEIVLKVNYILESRASTARADYFAQKQRKLNRRTSFSFQKEKKSGQQ). Phosphoserine is present on serine 510.

This sequence belongs to the SIN1 family. As to quaternary structure, component of the mechanistic target of rapamycin complex 2 (mTORC2), consisting in two heterotretramers composed of MTOR, MLST8, RICTOR and MAPKAP1/SIN1. The mTORC2 core complex associates with PRR5/PROTOR1 and/or PRR5L/PROTOR2. Contrary to mTORC1, mTORC2 does not bind to and is not sensitive to FKBP12-rapamycin. Interacts with MAP3K2. Interacts with ATF2. Interacts with MAPK8. Interacts with GTP-bound HRAS and KRAS; inhibiting their activity. Interacts with IFNAR2. In terms of processing, phosphorylation at Ser-128 by PKC promotes relocalization to the perinuclear region, where the mTORC2 complex specifically mediates phosphorylation of SGK1. Phosphorylated at Thr-86 by AKT1 or RPS6KB1 in the presence of growth factors; the effect of this phosphorylation is however unclear. According to two studies, phosphorylation at Thr-86 by AKT1 is part of a positive feedback loop that increases mTORC2 activation. According to another study, phosphorylation at Thr-86 and Thr-398 by RPS6KB1 promotes dissociation from the mTORC2 complex, leading to inhibit mTORC2 signaling.

Its subcellular location is the cell membrane. It localises to the endoplasmic reticulum membrane. It is found in the early endosome membrane. The protein resides in the late endosome membrane. The protein localises to the lysosome membrane. Its subcellular location is the golgi apparatus membrane. It localises to the mitochondrion outer membrane. It is found in the cytoplasm. The protein resides in the perinuclear region. The protein localises to the nucleus. Its activity is regulated as follows. Phosphatidylinositol 3,4,5-trisphosphate (PI(3,4,5)P3) promotes MTOR activation by relieving MAPKAP1/SIN1-mediated inhibition of MTOR that takes place in absence of PI(3,4,5)P3. Functionally, component of the mechanistic target of rapamycin complex 2 (mTORC2), which transduces signals from growth factors to pathways involved in proliferation, cytoskeletal organization, lipogenesis and anabolic output. In response to growth factors, mTORC2 phosphorylates and activates AGC protein kinase family members, including AKT (AKT1, AKT2 and AKT3), PKC (PRKCA, PRKCB and PRKCE) and SGK1. In contrast to mTORC1, mTORC2 is nutrient-insensitive. Within the mTORC2 complex, MAPKAP1/SIN1 acts as a substrate adapter which recognizes and binds AGC protein kinase family members for phosphorylation by MTOR. mTORC2 plays a critical role in AKT1 activation by mediating phosphorylation of different sites depending on the context, such as 'Thr-450', 'Ser-473', 'Ser-477' or 'Thr-479', facilitating the phosphorylation of the activation loop of AKT1 on 'Thr-308' by PDPK1/PDK1 which is a prerequisite for full activation. mTORC2 catalyzes the phosphorylation of SGK1 at 'Ser-422' and of PRKCA on 'Ser-657'. The mTORC2 complex also phosphorylates various proteins involved in insulin signaling, such as FBXW8 and IGF2BP1. mTORC2 acts upstream of Rho GTPases to regulate the actin cytoskeleton, probably by activating one or more Rho-type guanine nucleotide exchange factors. mTORC2 promotes the serum-induced formation of stress-fibers or F-actin. MAPKAP1 inhibits MAP3K2 by preventing its dimerization and autophosphorylation. Inhibits HRAS and KRAS independently of mTORC2 complex. Enhances osmotic stress-induced phosphorylation of ATF2 and ATF2-mediated transcription. Involved in ciliogenesis, regulates cilia length through its interaction with CCDC28B independently of mTORC2 complex. The polypeptide is Target of rapamycin complex 2 subunit MAPKAP1 (Rattus norvegicus (Rat)).